The sequence spans 279 residues: Phosphate import ATP-binding protein PstB (279 aa).

The ABC transporter domain maps to 33 to 274 (LDINKLNLFY…PLKKKTEDYI (242 aa)). 65–72 (GPSGCGKS) is a binding site for ATP.

Belongs to the ABC transporter superfamily. Phosphate importer (TC 3.A.1.7) family. In terms of assembly, the complex is composed of two ATP-binding proteins (PstB), two transmembrane proteins (PstC and PstA) and a solute-binding protein (PstS).

The protein resides in the cell inner membrane. It catalyses the reaction phosphate(out) + ATP + H2O = ADP + 2 phosphate(in) + H(+). Functionally, part of the ABC transporter complex PstSACB involved in phosphate import. Responsible for energy coupling to the transport system. In Colwellia psychrerythraea (strain 34H / ATCC BAA-681) (Vibrio psychroerythus), this protein is Phosphate import ATP-binding protein PstB.